Reading from the N-terminus, the 347-residue chain is S-adenosylmethionine:tRNA ribosyltransferase-isomerase (347 aa).

This sequence belongs to the QueA family. In terms of assembly, monomer.

The protein resides in the cytoplasm. It catalyses the reaction 7-aminomethyl-7-carbaguanosine(34) in tRNA + S-adenosyl-L-methionine = epoxyqueuosine(34) in tRNA + adenine + L-methionine + 2 H(+). Its pathway is tRNA modification; tRNA-queuosine biosynthesis. Functionally, transfers and isomerizes the ribose moiety from AdoMet to the 7-aminomethyl group of 7-deazaguanine (preQ1-tRNA) to give epoxyqueuosine (oQ-tRNA). The chain is S-adenosylmethionine:tRNA ribosyltransferase-isomerase from Methylococcus capsulatus (strain ATCC 33009 / NCIMB 11132 / Bath).